We begin with the raw amino-acid sequence, 430 residues long: Adenylosuccinate synthetase (430 aa).

Residues 12–18 (GDEGKGK) and 40–42 (GHT) each bind GTP. The active-site Proton acceptor is the Asp-13. Residues Asp-13 and Gly-40 each contribute to the Mg(2+) site. IMP contacts are provided by residues 13 to 16 (DEGK), 38 to 41 (NAGH), Thr-128, Arg-142, Gln-223, Thr-238, and Arg-302. His-41 (proton donor) is an active-site residue. 298–304 (VNTGRKR) is a substrate binding site. GTP-binding positions include Arg-304, 330 to 332 (KLD), and 412 to 414 (GVG).

It belongs to the adenylosuccinate synthetase family. As to quaternary structure, homodimer. Requires Mg(2+) as cofactor.

The protein resides in the cytoplasm. It catalyses the reaction IMP + L-aspartate + GTP = N(6)-(1,2-dicarboxyethyl)-AMP + GDP + phosphate + 2 H(+). It participates in purine metabolism; AMP biosynthesis via de novo pathway; AMP from IMP: step 1/2. In terms of biological role, plays an important role in the de novo pathway of purine nucleotide biosynthesis. Catalyzes the first committed step in the biosynthesis of AMP from IMP. The sequence is that of Adenylosuccinate synthetase from Corynebacterium glutamicum (strain ATCC 13032 / DSM 20300 / JCM 1318 / BCRC 11384 / CCUG 27702 / LMG 3730 / NBRC 12168 / NCIMB 10025 / NRRL B-2784 / 534).